We begin with the raw amino-acid sequence, 775 residues long: Transposon TX1 uncharacterized 82 kDa protein (775 aa).

Over residues methionine 1–lysine 10 the composition is skewed to basic and acidic residues. Disordered stretches follow at residues methionine 1–serine 46, proline 256–tyrosine 277, and proline 535–valine 565. The span at glutamate 35–serine 46 shows a compositional bias: polar residues. The span at proline 539–glutamate 549 shows a compositional bias: basic and acidic residues.

This chain is Transposon TX1 uncharacterized 82 kDa protein, found in Xenopus laevis (African clawed frog).